We begin with the raw amino-acid sequence, 790 residues long: Cadherin-6 (790 aa).

Positions 1 to 18 are cleaved as a signal peptide; it reads MRTYRYFLLLFWVGQPYP. A propeptide spanning residues 19-53 is cleaved from the precursor; the sequence is TFSNPLSKRTSGFPAKRKALELSANSRNELSRSKR. Cadherin domains lie at 54–159, 160–268, 269–383, 384–486, and 487–608; these read SWMW…EPIF, TKDV…PPRF, PQST…PPVF, SKLA…DNAP, and EFAE…LIHP. Residues 54–615 are Extracellular-facing; that stretch reads SWMWNQFFLL…IHPTGLSTGA (562 aa). N255 carries an N-linked (GlcNAc...) asparagine glycan. The interval 260-291 is disordered; that stretch reads DVNDNPPRFPQSTYQFKTPESSPPGTPIGRIK. A compositionally biased stretch (polar residues) spans 269 to 279; that stretch reads PQSTYQFKTPE. Residues N399, N437, N455, and N536 are each glycosylated (N-linked (GlcNAc...) asparagine). A helical transmembrane segment spans residues 616 to 636; sequence LVAILLCIVILLVTVVLFAAL. Residues 637 to 790 are Cytoplasmic-facing; sequence RRQRKKEPLI…YGGMDSDKDS (154 aa). S786 and S790 each carry phosphoserine.

Its subcellular location is the cell membrane. Cadherins are calcium-dependent cell adhesion proteins. They preferentially interact with themselves in a homophilic manner in connecting cells; cadherins may thus contribute to the sorting of heterogeneous cell types. This Mus musculus (Mouse) protein is Cadherin-6 (Cdh6).